The primary structure comprises 531 residues: MLGKEEEFTCKQKQCLSHFVTNLTSDVFALKNLPEVVKGALFSKYSRSVLGLRALLLKEFLSNEEDGDVCDEAYDFETDVQKAADFYQRVLDNFGDDSVGELGGAHLAMENVSILAAKVLEDARIGGSPLEKSTRYVYFDQKVRGEYLYYRDPILMTSAFKDMFLGTCDFLFDTYSALIPQVRAYFEKLYPKDSKTPASAYATSLRAKVLDCIRGLLPAATLTNLGFFGNGRFWQNLIHKLQGHNLAELRRLGDESLTELMKVIPSFVSRAEPHHHHHQAMMQYRRALKEQLKGLAEQATFSEEMSSSPSVQLVYGDPDGIYKVAAGFLFPYSNRSLTDLIDYCKKMPHEDLVQILESSVSARENRRHKSPRGLECVEFGFDILADFGAYRDLQRHRTLTQERQLLSTHHGYNFPVELLDTPMEKSYREAMERANETYNEIVQEFPEEAQYMVPMAYNIRWFFHVNARALQWICELRSQPQGHQNYRTIATGLVREVVKFNPMYELFFKFVDYSDIDLGRLNQEMRKEPTT.

2 ThyX domains span residues 38–274 (KGAL…AEPH) and 309–511 (PSVQ…FKFV).

This sequence belongs to the UPF0159 family.

This chain is UPF0159 protein CPn_0746/CP_1126/CPj0746/CpB0774, found in Chlamydia pneumoniae (Chlamydophila pneumoniae).